A 322-amino-acid polypeptide reads, in one-letter code: MAIGDRKKIIIDTDPGIDDAMAIFVALNSPEVDVIGLTTIFGNVYTTLATRNALHLLEVAGRTDIPVAEGTHKTFLNDTKLRIADFVHGKDGLGNQNFPPPKGKPIEKSGPEFLVEQAKLCPGEITVVALGPLTNLALAVQLDPEFSKNVGQIVLLGGAFAVNGNVNPASEANIFGDPEAADIVFTCGADIIAVGINVTHQVIMTADDKDKLASSKGKLAQYLCKILDVYYDYHLTAYEIKGVYLHDPATILAAFLPSLFTYTEGVARVQTSGITRGLTLLYNNLKRFEEANEWSDKPTVKVAVTVDAPAVVKLIMDRLMES.

Catalysis depends on residues aspartate 14 and histidine 246.

This sequence belongs to the IUNH family. As to quaternary structure, component of the NSH heterocomplex made of URH1/NSH1 and URH2/NSH2 which exhibits strong xanthosine nucleosidase activity. Interacts with URH1. As to expression, expressed in roots, seedlings and flowers.

The protein resides in the cytoplasm. The protein localises to the cytosol. It catalyses the reaction uridine + H2O = D-ribose + uracil. The catalysed reaction is inosine + H2O = hypoxanthine + D-ribose. The enzyme catalyses xanthosine + H2O = D-ribose + xanthine. Involved in pyrimidine breakdown, especially in response to dark stress. In the presence of URH1, exhibits efficient inosine and xanthosine hydrolytic activities. Support inosine breakdown especially during the late phase of senescence. The chain is Probable uridine nucleosidase 2 from Arabidopsis thaliana (Mouse-ear cress).